Reading from the N-terminus, the 1116-residue chain is cGMP-specific 3',5'-cyclic phosphodiesterase (1116 aa).

2 disordered regions span residues 1–36 and 82–136; these read MTDV…NGAA and KSEC…ATQQ. Residues 15–28 show a composition bias toward low complexity; that stretch reads VSSTSSEVAVETTS. Residues 86-136 are compositionally biased toward polar residues; it reads HSQSNNNQHVETAPSKQSSDSEASAPTTVSIPSANAKINSSSSGKTTATQQ. GAF domains are found at residues 241–393 and 425–611; these read DIDV…GIGI and NLEC…GLGI. Residues 641-964 enclose the PDEase domain; the sequence is SQDQTEKLAQ…RNWQDLAEKV (324 aa). Histidine 717 serves as the catalytic Proton donor. A divalent metal cation contacts are provided by histidine 721, histidine 757, aspartate 758, and aspartate 868. Disordered stretches follow at residues 1005–1031 and 1067–1116; these read QHGG…LSIK and HVSE…CALL. Composition is skewed to basic and acidic residues over residues 1014–1023 and 1067–1076; these read EDTHTPEHQR and HVSEDMDDKS. Over residues 1085 to 1103 the composition is skewed to low complexity; sequence SGSVGRMSASSSTSSAGTV. The span at 1106–1116 shows a compositional bias: basic residues; that stretch reads SKKRSKLCALL. The residue at position 1113 (cysteine 1113) is a Cysteine methyl ester. Cysteine 1113 is lipidated: S-farnesyl cysteine. Residues 1114–1116 constitute a propeptide, removed in mature form; sequence ALL.

Belongs to the cyclic nucleotide phosphodiesterase family. As to quaternary structure, interacts with PrBP. Requires a divalent metal cation as cofactor.

Its subcellular location is the cell membrane. The catalysed reaction is 3',5'-cyclic GMP + H2O = GMP + H(+). In terms of biological role, has a role regulating cGMP transport in Malpighian tubule principal cells. This is cGMP-specific 3',5'-cyclic phosphodiesterase from Drosophila mojavensis (Fruit fly).